A 517-amino-acid polypeptide reads, in one-letter code: Recombining binding protein suppressor of hairless-like protein (517 aa).

Residues 26 to 37 (EMQLQSEADRRS) show a composition bias toward basic and acidic residues. Residues 26–48 (EMQLQSEADRRSLPGTWTRSSPE) form a disordered region. DNA-binding stretches follow at residues 78–88 (QKSYGNEKRFF), 193–198 (SKPSQK), and 220–225 (RLRSQT). An IPT/TIG domain is found at 387-512 (LISTLELSGG…HQEFTRTNFH (126 aa)).

Belongs to the Su(H) family. In terms of assembly, interacts weakly with EBNA2. Does not interact with any Notch proteins.

Its subcellular location is the nucleus. Its function is as follows. Putative transcription factor, which cooperates with EBNA2 to activate transcription. The protein is Recombining binding protein suppressor of hairless-like protein (RBPJL) of Homo sapiens (Human).